We begin with the raw amino-acid sequence, 437 residues long: 3-ketoacyl-CoA thiolase (437 aa).

Cys-99 (acyl-thioester intermediate) is an active-site residue. Active-site proton acceptor residues include His-392 and Cys-422.

Belongs to the thiolase-like superfamily. Thiolase family. In terms of assembly, heterotetramer of two alpha chains (FadJ) and two beta chains (FadI).

It is found in the cytoplasm. The catalysed reaction is an acyl-CoA + acetyl-CoA = a 3-oxoacyl-CoA + CoA. It participates in lipid metabolism; fatty acid beta-oxidation. In terms of biological role, catalyzes the final step of fatty acid oxidation in which acetyl-CoA is released and the CoA ester of a fatty acid two carbons shorter is formed. The chain is 3-ketoacyl-CoA thiolase from Pectobacterium atrosepticum (strain SCRI 1043 / ATCC BAA-672) (Erwinia carotovora subsp. atroseptica).